Here is a 257-residue protein sequence, read N- to C-terminus: Deoxyribose-phosphate aldolase (257 aa).

Asp-102 acts as the Proton donor/acceptor in catalysis. Lys-166 (schiff-base intermediate with acetaldehyde) is an active-site residue. The active-site Proton donor/acceptor is the Lys-198.

This sequence belongs to the DeoC/FbaB aldolase family. DeoC type 2 subfamily.

It localises to the cytoplasm. The enzyme catalyses 2-deoxy-D-ribose 5-phosphate = D-glyceraldehyde 3-phosphate + acetaldehyde. It functions in the pathway carbohydrate degradation; 2-deoxy-D-ribose 1-phosphate degradation; D-glyceraldehyde 3-phosphate and acetaldehyde from 2-deoxy-alpha-D-ribose 1-phosphate: step 2/2. Its function is as follows. Catalyzes a reversible aldol reaction between acetaldehyde and D-glyceraldehyde 3-phosphate to generate 2-deoxy-D-ribose 5-phosphate. The chain is Deoxyribose-phosphate aldolase from Shewanella piezotolerans (strain WP3 / JCM 13877).